We begin with the raw amino-acid sequence, 291 residues long: uncharacterized protein (291 aa).

4 helical membrane-spanning segments follow: residues 13–33, 84–104, 111–131, and 219–239; these read IILI…SITI, IVLF…IGII, LLHL…FIII, and LIYC…IYYL.

It localises to the cell membrane. This is an uncharacterized protein from Ureaplasma parvum serovar 3 (strain ATCC 700970).